The sequence spans 88 residues: Small ribosomal subunit protein bS20 (88 aa).

This sequence belongs to the bacterial ribosomal protein bS20 family.

In terms of biological role, binds directly to 16S ribosomal RNA. The protein is Small ribosomal subunit protein bS20 of Rhodopseudomonas palustris (strain BisB18).